The chain runs to 335 residues: Adenosine deaminase (335 aa).

Zn(2+)-binding residues include histidine 12 and histidine 14. Positions 14 and 16 each coordinate substrate. Histidine 197 provides a ligand contact to Zn(2+). The active-site Proton donor is the glutamate 200. Aspartate 278 contributes to the Zn(2+) binding site.

The protein belongs to the metallo-dependent hydrolases superfamily. Adenosine and AMP deaminases family. Adenosine deaminase subfamily. Zn(2+) serves as cofactor.

It catalyses the reaction adenosine + H2O + H(+) = inosine + NH4(+). It carries out the reaction 2'-deoxyadenosine + H2O + H(+) = 2'-deoxyinosine + NH4(+). In terms of biological role, catalyzes the hydrolytic deamination of adenosine and 2-deoxyadenosine. The polypeptide is Adenosine deaminase (Clostridium botulinum (strain ATCC 19397 / Type A)).